The primary structure comprises 396 residues: NADH-quinone oxidoreductase subunit D (396 aa).

The protein belongs to the complex I 49 kDa subunit family. NDH-1 is composed of 14 different subunits. Subunits NuoB, C, D, E, F, and G constitute the peripheral sector of the complex.

The protein resides in the cell inner membrane. The enzyme catalyses a quinone + NADH + 5 H(+)(in) = a quinol + NAD(+) + 4 H(+)(out). NDH-1 shuttles electrons from NADH, via FMN and iron-sulfur (Fe-S) centers, to quinones in the respiratory chain. The immediate electron acceptor for the enzyme in this species is believed to be ubiquinone. Couples the redox reaction to proton translocation (for every two electrons transferred, four hydrogen ions are translocated across the cytoplasmic membrane), and thus conserves the redox energy in a proton gradient. This is NADH-quinone oxidoreductase subunit D from Methylorubrum populi (strain ATCC BAA-705 / NCIMB 13946 / BJ001) (Methylobacterium populi).